A 94-amino-acid chain; its full sequence is Large ribosomal subunit protein bL25 (94 aa).

The protein belongs to the bacterial ribosomal protein bL25 family. Part of the 50S ribosomal subunit; part of the 5S rRNA/L5/L18/L25 subcomplex. Contacts the 5S rRNA. Binds to the 5S rRNA independently of L5 and L18.

This is one of the proteins that binds to the 5S RNA in the ribosome where it forms part of the central protuberance. This Shigella boydii serotype 18 (strain CDC 3083-94 / BS512) protein is Large ribosomal subunit protein bL25.